Consider the following 228-residue polypeptide: Calcyclin-binding protein (228 aa).

The residue at position 1 (Met1) is an N-acetylmethionine. Ala2 carries the N-acetylalanine modification. The tract at residues 2–80 (ASEELQKDLE…YTVKISNYGW (79 aa)) is interaction with SIAH1. Ser3 is modified (phosphoserine). 2 positions are modified to N6-acetyllysine: Lys8 and Lys19. Ser34 carries the phosphoserine modification. The CS domain maps to 73–167 (VKISNYGWDQ…VENTRWDYLT (95 aa)). The tract at residues 73–228 (VKISNYGWDQ…EKQAKGDTEF (156 aa)) is interaction with SKP1. 2 positions are modified to N6-acetyllysine: Lys85 and Lys118. Residues 154-228 (CRKKVENTRW…EKQAKGDTEF (75 aa)) are interaction with S100A6. The SGS domain maps to 168-228 (QVEKECKEKE…EKQAKGDTEF (61 aa)).

Homodimer. Interacts with proteins of the S100 family S100A1, S100A6, S100B, S100P and S100A12 in a calcium-dependent manner. Component of some large E3 complex at least composed of UBE2D1, SIAH1, CACYBP/SIP, SKP1, APC and TBL1X. Interacts directly with SIAH1, SIAH2 and SKP1. Phosphorylated on serine residues. Phosphorylated upon induction by RA or at high calcium concentrations.

The protein resides in the nucleus. The protein localises to the cytoplasm. Functionally, may be involved in calcium-dependent ubiquitination and subsequent proteasomal degradation of target proteins. Probably serves as a molecular bridge in ubiquitin E3 complexes. Participates in the ubiquitin-mediated degradation of beta-catenin (CTNNB1). This is Calcyclin-binding protein (CACYBP) from Homo sapiens (Human).